The chain runs to 982 residues: Mitochondrial DNA mismatch repair protein mutS homolog (982 aa).

Residue 698–705 (SVNGAGKS) coordinates ATP. Positions 905-951 (CEICGAPADAVHHIKPKSEHKKLCNRKLNRRSNLVPVCSSCHLDIHR) constitute an HNH domain.

Belongs to the DNA mismatch repair MutS family.

The protein localises to the mitochondrion. May be involved in DNA-mismatch repair. The sequence is that of Mitochondrial DNA mismatch repair protein mutS homolog from Sarcophyton glaucum (Toadstool umbrella leather coral).